The chain runs to 119 residues: Urease subunit beta (119 aa).

It belongs to the urease beta subunit family. In terms of assembly, heterotrimer of UreA (gamma), UreB (beta) and UreC (alpha) subunits. Three heterotrimers associate to form the active enzyme.

It is found in the cytoplasm. The catalysed reaction is urea + 2 H2O + H(+) = hydrogencarbonate + 2 NH4(+). Its pathway is nitrogen metabolism; urea degradation; CO(2) and NH(3) from urea (urease route): step 1/1. This Tolumonas auensis (strain DSM 9187 / NBRC 110442 / TA 4) protein is Urease subunit beta.